The chain runs to 340 residues: Holliday junction branch migration complex subunit RuvB (340 aa).

A large ATPase domain (RuvB-L) region spans residues 1 to 182 (MSDIDPTVRA…FGIPTRLQFY (182 aa)). ATP-binding positions include leucine 21, arginine 22, glycine 63, lysine 66, threonine 67, threonine 68, 129-131 (EDF), arginine 172, tyrosine 182, and arginine 219. Threonine 67 serves as a coordination point for Mg(2+). The segment at 183–253 (TEDELFIIVD…LADMALNRLG (71 aa)) is small ATPAse domain (RuvB-S). Positions 256 to 340 (HLGLDGADRR…PRAQTDLFEG (85 aa)) are head domain (RuvB-H). The DNA site is built by arginine 292, arginine 311, and arginine 316.

This sequence belongs to the RuvB family. As to quaternary structure, homohexamer. Forms an RuvA(8)-RuvB(12)-Holliday junction (HJ) complex. HJ DNA is sandwiched between 2 RuvA tetramers; dsDNA enters through RuvA and exits via RuvB. An RuvB hexamer assembles on each DNA strand where it exits the tetramer. Each RuvB hexamer is contacted by two RuvA subunits (via domain III) on 2 adjacent RuvB subunits; this complex drives branch migration. In the full resolvosome a probable DNA-RuvA(4)-RuvB(12)-RuvC(2) complex forms which resolves the HJ.

It localises to the cytoplasm. The enzyme catalyses ATP + H2O = ADP + phosphate + H(+). Its function is as follows. The RuvA-RuvB-RuvC complex processes Holliday junction (HJ) DNA during genetic recombination and DNA repair, while the RuvA-RuvB complex plays an important role in the rescue of blocked DNA replication forks via replication fork reversal (RFR). RuvA specifically binds to HJ cruciform DNA, conferring on it an open structure. The RuvB hexamer acts as an ATP-dependent pump, pulling dsDNA into and through the RuvAB complex. RuvB forms 2 homohexamers on either side of HJ DNA bound by 1 or 2 RuvA tetramers; 4 subunits per hexamer contact DNA at a time. Coordinated motions by a converter formed by DNA-disengaged RuvB subunits stimulates ATP hydrolysis and nucleotide exchange. Immobilization of the converter enables RuvB to convert the ATP-contained energy into a lever motion, pulling 2 nucleotides of DNA out of the RuvA tetramer per ATP hydrolyzed, thus driving DNA branch migration. The RuvB motors rotate together with the DNA substrate, which together with the progressing nucleotide cycle form the mechanistic basis for DNA recombination by continuous HJ branch migration. Branch migration allows RuvC to scan DNA until it finds its consensus sequence, where it cleaves and resolves cruciform DNA. This chain is Holliday junction branch migration complex subunit RuvB, found in Roseobacter denitrificans (strain ATCC 33942 / OCh 114) (Erythrobacter sp. (strain OCh 114)).